We begin with the raw amino-acid sequence, 985 residues long: Regulator of telomere elongation helicase 1 homolog (985 aa).

Residues 7-303 (AGIPVHFPFE…QDMGGDEPKD (297 aa)) enclose the Helicase ATP-binding domain. 42-49 (SPTGTGKT) lines the ATP pocket. Residues Cys-146, Cys-164, Cys-173, and Cys-209 each contribute to the [4Fe-4S] cluster site. Positions 252-255 (DEAH) match the DEAH box motif. Residues 858–884 (GSSGMVKIHKRERSSPTQPESSSQVSK) are disordered. The segment covering 872–882 (SPTQPESSSQV) has biased composition (polar residues). Thr-874 carries the phosphothreonine modification.

This sequence belongs to the helicase family. RAD3/XPD subfamily.

It localises to the nucleus. The enzyme catalyses ATP + H2O = ADP + phosphate + H(+). Functionally, a probable ATP-dependent DNA helicase implicated in DNA repair and the maintenance of genomic stability. Acts as an anti-recombinase to counteract toxic recombination and limit crossover during meiosis. Regulates meiotic recombination and crossover homeostasis by physically dissociating strand invasion events and thereby promotes noncrossover repair by meiotic synthesis dependent strand annealing (SDSA) as well as disassembly of D loop recombination intermediates. The sequence is that of Regulator of telomere elongation helicase 1 homolog from Drosophila yakuba (Fruit fly).